The sequence spans 211 residues: Pyrrolidone-carboxylate peptidase 1 (211 aa).

Active-site residues include E79, C142, and H164.

This sequence belongs to the peptidase C15 family. In terms of assembly, homotetramer.

Its subcellular location is the cytoplasm. It catalyses the reaction Release of an N-terminal pyroglutamyl group from a polypeptide, the second amino acid generally not being Pro.. In terms of biological role, removes 5-oxoproline from various penultimate amino acid residues except L-proline. In Saccharolobus solfataricus (strain ATCC 35092 / DSM 1617 / JCM 11322 / P2) (Sulfolobus solfataricus), this protein is Pyrrolidone-carboxylate peptidase 1 (pcp1).